Reading from the N-terminus, the 480-residue chain is Beta-glucosidase A (480 aa).

Catalysis depends on E177, which acts as the Proton donor. The Nucleophile role is filled by E378.

It belongs to the glycosyl hydrolase 1 family.

It catalyses the reaction Hydrolysis of terminal, non-reducing beta-D-glucosyl residues with release of beta-D-glucose.. The protein is Beta-glucosidase A (bglA) of Enterobacter agglomerans (Erwinia herbicola).